The following is a 587-amino-acid chain: Protoheme IX farnesyltransferase (587 aa).

Residues 1–317 are unknown; sequence MAARSLMRIL…ISLTKPKVIS (317 aa). Helical transmembrane passes span 9 to 29, 58 to 78, 93 to 113, 123 to 143, 172 to 192, 195 to 215, 238 to 258, 260 to 280, 315 to 335, 337 to 357, 386 to 406, 409 to 429, 437 to 457, 464 to 484, 522 to 542, and 560 to 580; these read ILLVGLGLTLATIISGALVTI, LLHRLFVALALLAVFAGLVAV, GIAAAFFLLQALAGALLVWGV, LSGALLAFGAQSLTIALIAVP, AAGVAALAIGARSVVPGFGMM, VPTNSVSAVGFAALLSVWMAL, SLFLPALALLALLGAFIPVAG, LISLTAIALLWAATIIAAVIL, VISLLLVTTLTTMFITEAGLP, WWLVIWTMIGGYLAAGGAGAI, AAFIFGLILSVLSIIVLWVFT, LAAFFALLGIIYYAWFYTGWL, IIIGGGAGAIPPLVGWTAVTG, VVLFAIIFYWTPPHFWALALV, LLPVAIGAMSWIYLIGAVVLG, and AIWGLYKYSLLYLALVFAAMV. The tract at residues 318 to 587 is protoheme IX prenyltransferase; it reads LLLVTTLTTM…AMVADRLIIG (270 aa).

In the C-terminal section; belongs to the UbiA prenyltransferase family. Protoheme IX farnesyltransferase subfamily.

It is found in the cell membrane. The catalysed reaction is heme b + (2E,6E)-farnesyl diphosphate + H2O = Fe(II)-heme o + diphosphate. The protein operates within porphyrin-containing compound metabolism; heme O biosynthesis; heme O from protoheme: step 1/1. Converts heme B (protoheme IX) to heme O by substitution of the vinyl group on carbon 2 of heme B porphyrin ring with a hydroxyethyl farnesyl side group. This chain is Protoheme IX farnesyltransferase (ctaB), found in Chloroflexus aurantiacus (strain ATCC 29366 / DSM 635 / J-10-fl).